The chain runs to 197 residues: Ribonuclease HII (197 aa).

The region spanning 9 to 197 (KLIAGVDEVG…APVKKALEQF (189 aa)) is the RNase H type-2 domain. Positions 15, 16, and 107 each coordinate a divalent metal cation.

This sequence belongs to the RNase HII family. The cofactor is Mn(2+). Mg(2+) is required as a cofactor.

The protein resides in the cytoplasm. It carries out the reaction Endonucleolytic cleavage to 5'-phosphomonoester.. Its function is as follows. Endonuclease that specifically degrades the RNA of RNA-DNA hybrids. This is Ribonuclease HII (rnhB) from Haemophilus influenzae (strain ATCC 51907 / DSM 11121 / KW20 / Rd).